The sequence spans 261 residues: Ribosome-inactivating protein PD-L3/PD-L4 (261 aa).

An N-linked (GlcNAc...) asparagine; in PD-L3 glycan is attached at Asn-10. Cystine bridges form between Cys-34–Cys-258 and Cys-84–Cys-105. The active site involves Glu-175.

It belongs to the ribosome-inactivating protein family. Type 1 RIP subfamily.

The enzyme catalyses Endohydrolysis of the N-glycosidic bond at one specific adenosine on the 28S rRNA.. In terms of biological role, inhibits protein synthesis. Does not cleave supercoiled pBR322 dsDNA. The sequence is that of Ribosome-inactivating protein PD-L3/PD-L4 from Phytolacca dioica (Bella sombra tree).